The chain runs to 676 residues: Cysteine-rich receptor-like protein kinase 4 (676 aa).

A signal peptide spans Met1–Ala16. At Asp17–Ser287 the chain is on the extracellular side. Gnk2-homologous domains lie at His31 to Ile135 and Ile146 to Phe246. 7 N-linked (GlcNAc...) asparagine glycosylation sites follow: Asn33, Asn46, Asn64, Asn152, Asn181, Asn243, and Asn248. The tract at residues Thr252–Ser279 is disordered. An N-linked (GlcNAc...) asparagine glycan is attached at Asn286. A helical transmembrane segment spans residues Ser288–Phe308. Topologically, residues Ser309–Arg676 are cytoplasmic. The Protein kinase domain occupies Phe351–Leu631. ATP-binding positions include Leu357 to Val365 and Lys379. Phosphotyrosine is present on Tyr424. The active-site Proton acceptor is Asp476. Phosphothreonine is present on Thr516. Residue Tyr524 is modified to Phosphotyrosine.

This sequence belongs to the protein kinase superfamily. Ser/Thr protein kinase family. CRK subfamily.

It is found in the membrane. The catalysed reaction is L-seryl-[protein] + ATP = O-phospho-L-seryl-[protein] + ADP + H(+). It carries out the reaction L-threonyl-[protein] + ATP = O-phospho-L-threonyl-[protein] + ADP + H(+). This chain is Cysteine-rich receptor-like protein kinase 4 (CRK4), found in Arabidopsis thaliana (Mouse-ear cress).